The chain runs to 430 residues: Enolase (430 aa).

Q163 provides a ligand contact to (2R)-2-phosphoglycerate. E205 acts as the Proton donor in catalysis. Mg(2+) is bound by residues D242, E287, and D314. Residues K339, R368, S369, and K390 each coordinate (2R)-2-phosphoglycerate. The active-site Proton acceptor is K339.

This sequence belongs to the enolase family. Requires Mg(2+) as cofactor.

Its subcellular location is the cytoplasm. The protein resides in the secreted. It is found in the cell surface. It carries out the reaction (2R)-2-phosphoglycerate = phosphoenolpyruvate + H2O. The protein operates within carbohydrate degradation; glycolysis; pyruvate from D-glyceraldehyde 3-phosphate: step 4/5. Catalyzes the reversible conversion of 2-phosphoglycerate (2-PG) into phosphoenolpyruvate (PEP). It is essential for the degradation of carbohydrates via glycolysis. The chain is Enolase from Clostridioides difficile (strain 630) (Peptoclostridium difficile).